Consider the following 189-residue polypeptide: Small ribosomal subunit protein uS7 (189 aa).

It belongs to the universal ribosomal protein uS7 family. As to quaternary structure, part of the 30S ribosomal subunit.

One of the primary rRNA binding proteins, it binds directly to 16S rRNA where it nucleates assembly of the head domain of the 30S subunit. Is located at the subunit interface close to the decoding center. The sequence is that of Small ribosomal subunit protein uS7 from Methanosarcina acetivorans (strain ATCC 35395 / DSM 2834 / JCM 12185 / C2A).